The sequence spans 397 residues: Serpin B10 (397 aa).

The Nuclear localization signal motif lies at Lys74 to Lys77.

Belongs to the serpin family. Ov-serpin subfamily. As to expression, expressed in many tissues, including brain, heart, kidney, liver, lung, prostate, skin, spleen and stomach.

The protein localises to the nucleus. Its subcellular location is the cytoplasm. Its function is as follows. Protease inhibitor that may play a role in the regulation of protease activities during hematopoiesis and apoptosis induced by TNF. May regulate protease activities in the cytoplasm and in the nucleus. Inhibits plasmin. The chain is Serpin B10 (Serpinb10) from Rattus norvegicus (Rat).